We begin with the raw amino-acid sequence, 239 residues long: uncharacterized protein (239 aa).

The region spanning 1 to 65 (MRLDKLLANS…DYREFIYLMM (65 aa)) is the S4 RNA-binding domain. The active-site Nucleophile is aspartate 103.

The protein belongs to the pseudouridine synthase RsuA family.

The enzyme catalyses a uridine in RNA = a pseudouridine in RNA. This is an uncharacterized protein from Bacillus subtilis (strain 168).